Consider the following 329-residue polypeptide: 4-hydroxythreonine-4-phosphate dehydrogenase (329 aa).

Substrate contacts are provided by histidine 136 and threonine 137. Positions 166, 211, and 266 each coordinate a divalent metal cation. Substrate contacts are provided by lysine 274, asparagine 283, and arginine 292.

Belongs to the PdxA family. In terms of assembly, homodimer. It depends on Zn(2+) as a cofactor. Mg(2+) serves as cofactor. The cofactor is Co(2+).

The protein resides in the cytoplasm. The catalysed reaction is 4-(phosphooxy)-L-threonine + NAD(+) = 3-amino-2-oxopropyl phosphate + CO2 + NADH. The protein operates within cofactor biosynthesis; pyridoxine 5'-phosphate biosynthesis; pyridoxine 5'-phosphate from D-erythrose 4-phosphate: step 4/5. Functionally, catalyzes the NAD(P)-dependent oxidation of 4-(phosphooxy)-L-threonine (HTP) into 2-amino-3-oxo-4-(phosphooxy)butyric acid which spontaneously decarboxylates to form 3-amino-2-oxopropyl phosphate (AHAP). The protein is 4-hydroxythreonine-4-phosphate dehydrogenase of Salmonella typhi.